We begin with the raw amino-acid sequence, 294 residues long: Bifunctional protein FolD (294 aa).

NADP(+) contacts are provided by residues 166 to 168, serine 191, and isoleucine 232; that span reads GRS.

Belongs to the tetrahydrofolate dehydrogenase/cyclohydrolase family. As to quaternary structure, homodimer.

The enzyme catalyses (6R)-5,10-methylene-5,6,7,8-tetrahydrofolate + NADP(+) = (6R)-5,10-methenyltetrahydrofolate + NADPH. It catalyses the reaction (6R)-5,10-methenyltetrahydrofolate + H2O = (6R)-10-formyltetrahydrofolate + H(+). The protein operates within one-carbon metabolism; tetrahydrofolate interconversion. Catalyzes the oxidation of 5,10-methylenetetrahydrofolate to 5,10-methenyltetrahydrofolate and then the hydrolysis of 5,10-methenyltetrahydrofolate to 10-formyltetrahydrofolate. The chain is Bifunctional protein FolD from Bradyrhizobium sp. (strain BTAi1 / ATCC BAA-1182).